Here is a 438-residue protein sequence, read N- to C-terminus: Enolase (438 aa).

The substrate site is built by His159 and Glu168. Glu211 functions as the Proton donor in the catalytic mechanism. Asp246, Glu297, and Asp322 together coordinate Mg(2+). Residues Glu297 and Asp322 each coordinate substrate. Catalysis depends on Lys347, which acts as the Proton acceptor. Substrate contacts are provided by residues Ser374–Ser377 and Lys398.

Belongs to the enolase family. In terms of assembly, homodimer. The cofactor is Mg(2+).

It is found in the cytoplasm. The enzyme catalyses (2R)-2-phosphoglycerate = phosphoenolpyruvate + H2O. The protein operates within carbohydrate degradation; glycolysis; pyruvate from D-glyceraldehyde 3-phosphate: step 4/5. This Neurospora crassa (strain ATCC 24698 / 74-OR23-1A / CBS 708.71 / DSM 1257 / FGSC 987) protein is Enolase (emp-7).